The sequence spans 403 residues: Tryptophan synthase beta chain (403 aa).

The residue at position 90 (Lys90) is an N6-(pyridoxal phosphate)lysine.

Belongs to the TrpB family. In terms of assembly, tetramer of two alpha and two beta chains. It depends on pyridoxal 5'-phosphate as a cofactor.

The catalysed reaction is (1S,2R)-1-C-(indol-3-yl)glycerol 3-phosphate + L-serine = D-glyceraldehyde 3-phosphate + L-tryptophan + H2O. It participates in amino-acid biosynthesis; L-tryptophan biosynthesis; L-tryptophan from chorismate: step 5/5. Functionally, the beta subunit is responsible for the synthesis of L-tryptophan from indole and L-serine. This is Tryptophan synthase beta chain from Leifsonia xyli subsp. xyli (strain CTCB07).